A 638-amino-acid polypeptide reads, in one-letter code: MTYALLNKIDAPADLRKLDRRELRTLADELRAYVLESVSQTGGHLSSNLGTVELTIALHYVFNTPDDRLVWDVGHQSYPHKILTGRRERMGTLRQWGGISGFPRRSESEYDTFGTAHSSTSISAALGMALGARTLGEKRVSVAVIGDGAMTAGMAFEALNNAGVYKDLPLVVVLNDNDMSISPPVGALNRHLARLLSGQFYAATKKGIEKVLSVAPPVLEFAKRFEEHAKGMMVPATLFEEFGFNYIGPIDGHDLNSLVPTLQNIRERALEGAGPQFLHVVTKKGQGYKLAEADPILYHGPGKFNPAEGIRPAAKPARKTYTQVFGDWLCDMAAADKRLVGITPAMREGSGMVEFERRFPDRYYDVGIAEQHAVTFAGGLACEGLKPVVAIYSTFLQRGYDQLIHDVALQNLPVVFALDRAGLVGADGATHAGAYDIAYLRCIPNMMVMTPSDENECRQLLTTAFHQACPSAVRYPRGSGPGAAIAAELTTVPVGKGVMRREGGARAGHRVGFLAFGSMVHPALGAAEALDAAVADMRFVKPLDVELVKRLAAENDYLVTVEEGSVMGGAGSAVLEALAEAGIDKPVLTLGLPDRFVDHGDPAYLLQQCGLDAAGIERSVRERFGLDQPKVTVASRVA.

Thiamine diphosphate-binding positions include H75 and 116–118; that span reads AHS. Mg(2+) is bound at residue D147. Thiamine diphosphate is bound by residues 148-149, N177, Y288, and E370; that span reads GA. N177 provides a ligand contact to Mg(2+).

It belongs to the transketolase family. DXPS subfamily. As to quaternary structure, homodimer. Mg(2+) serves as cofactor. The cofactor is thiamine diphosphate.

The catalysed reaction is D-glyceraldehyde 3-phosphate + pyruvate + H(+) = 1-deoxy-D-xylulose 5-phosphate + CO2. It participates in metabolic intermediate biosynthesis; 1-deoxy-D-xylulose 5-phosphate biosynthesis; 1-deoxy-D-xylulose 5-phosphate from D-glyceraldehyde 3-phosphate and pyruvate: step 1/1. Catalyzes the acyloin condensation reaction between C atoms 2 and 3 of pyruvate and glyceraldehyde 3-phosphate to yield 1-deoxy-D-xylulose-5-phosphate (DXP). This chain is 1-deoxy-D-xylulose-5-phosphate synthase, found in Cupriavidus necator (strain ATCC 17699 / DSM 428 / KCTC 22496 / NCIMB 10442 / H16 / Stanier 337) (Ralstonia eutropha).